The following is an 883-amino-acid chain: MEFTGNRVRQLFLEYFEQKGHTIVASSSLVPHNDPTLLFSNAGMNQFKDVFLGFEKRPYLRATTSQKCVRAGGKHNDLDTVGRTARHHTFFEMLGNFSFGDYFKKDAIRYAWEFLTDVCGLPKDKLYATVYLDDDEAFALWRDMIGLPEARILRLGEKDNFWAMGDTGPCGPCSEILIDRGEHLRCKAEECAIGKCDCDRWLEIWNLVFMQYNRDENGTMTPLPRPSIDTGMGLERVTSVLQKVGSNYDTDLLRPLIAFVEQLCGQVYHRDDRGFPFRVIADHIRSCTFLITDGVLPSNEGRGYVLRRILRRAVRFGKVLGIDKPFMYEIVPVVVELMGEAYPDIREKQDFVCKVIKIEEERFHETLHDGMRIAADMVAKVKQEGGNVLPGKQAFTLYDTYGFPLDLAEDIAEENGLTVDKDGFQQAMEAQRERARAARQDTAYGAGMELWAELLQQLGPTVFTGYGRTSGESVVKAIVAGATRVTEAGAGTAVQVVLAETPFYAESGGQIGDSGLLRAGDAVVRVEDTKKMAGGLHVHFGVVAEGVFKEGDQVVAEVESARRLAIARHHSATHLMHKALKEVLGEHVNQAGSLVTPDRLRFDFSHFSPLTRDEWNRIEAAVNRAVFQALPVEVFETSIDEAKAMGATALFGEKYGDRVRVVRMGNYSMELCGGTHLDNTSQVGLCKLLSESGIGAGLRRIEAVTGEAALAYLNEQEETVRMLAEKLKVPAAEVTNRVDSLQAQLREKEREMEQLLSRLAKYQIDDLLAGKEEINGVTVLAAKVQAPDMDALRSMSDLLKEKLGSGVLILGAVAGDKVNLVAAATKDIVGRGVHAGNLVKEAAKVCGGGGGGRPDMAQAGGKDPSRLSDALEAAKKLLKSQIK.

Residues histidine 570, histidine 574, cysteine 672, and histidine 676 each coordinate Zn(2+).

It belongs to the class-II aminoacyl-tRNA synthetase family. The cofactor is Zn(2+).

It is found in the cytoplasm. The enzyme catalyses tRNA(Ala) + L-alanine + ATP = L-alanyl-tRNA(Ala) + AMP + diphosphate. Functionally, catalyzes the attachment of alanine to tRNA(Ala) in a two-step reaction: alanine is first activated by ATP to form Ala-AMP and then transferred to the acceptor end of tRNA(Ala). Also edits incorrectly charged Ser-tRNA(Ala) and Gly-tRNA(Ala) via its editing domain. The chain is Alanine--tRNA ligase from Heliobacterium modesticaldum (strain ATCC 51547 / Ice1).